The primary structure comprises 58 residues: Large ribosomal subunit protein bL32 (58 aa).

Residues 1–15 (MAVPKKKTSKAKRNQ) show a composition bias toward basic residues. Positions 1–23 (MAVPKKKTSKAKRNQRSATWKGK) are disordered.

It belongs to the bacterial ribosomal protein bL32 family.

The protein is Large ribosomal subunit protein bL32 of Parasynechococcus marenigrum (strain WH8102).